We begin with the raw amino-acid sequence, 313 residues long: tRNA dimethylallyltransferase (313 aa).

G11–T18 provides a ligand contact to ATP. Position 13 to 18 (T13 to T18) interacts with substrate. 3 interaction with substrate tRNA regions span residues D36–L39, Q160–R164, and R243–R248.

The protein belongs to the IPP transferase family. As to quaternary structure, monomer. Mg(2+) serves as cofactor.

It carries out the reaction adenosine(37) in tRNA + dimethylallyl diphosphate = N(6)-dimethylallyladenosine(37) in tRNA + diphosphate. Its function is as follows. Catalyzes the transfer of a dimethylallyl group onto the adenine at position 37 in tRNAs that read codons beginning with uridine, leading to the formation of N6-(dimethylallyl)adenosine (i(6)A). The chain is tRNA dimethylallyltransferase from Neisseria meningitidis serogroup B (strain ATCC BAA-335 / MC58).